A 125-amino-acid polypeptide reads, in one-letter code: Large ribosomal subunit protein bL20 (125 aa).

It belongs to the bacterial ribosomal protein bL20 family.

Functionally, binds directly to 23S ribosomal RNA and is necessary for the in vitro assembly process of the 50S ribosomal subunit. It is not involved in the protein synthesizing functions of that subunit. The sequence is that of Large ribosomal subunit protein bL20 from Rhizorhabdus wittichii (strain DSM 6014 / CCUG 31198 / JCM 15750 / NBRC 105917 / EY 4224 / RW1) (Sphingomonas wittichii).